The chain runs to 176 residues: MFKGTTIIAVRKGDKVSVAGDGQITFGENTILKHGAKKIRRLYNGEVIVGFAGSVADALTLSQKFEEKLEQYGGNLKRAAVELAQEWRKDKILRKLEALLIAVDKKDTLLISGTGEVIEPDEDVIGIGSGGNYAMAAALALRYNTDLDTEDIAKKALEIASKICVYTNNNITVETL.

Residue Thr-5 is part of the active site. Na(+)-binding residues include Ser-161, Cys-164, and Thr-167.

This sequence belongs to the peptidase T1B family. HslV subfamily. As to quaternary structure, a double ring-shaped homohexamer of HslV is capped on each side by a ring-shaped HslU homohexamer. The assembly of the HslU/HslV complex is dependent on binding of ATP.

The protein localises to the cytoplasm. It carries out the reaction ATP-dependent cleavage of peptide bonds with broad specificity.. Its activity is regulated as follows. Allosterically activated by HslU binding. Its function is as follows. Protease subunit of a proteasome-like degradation complex believed to be a general protein degrading machinery. This Thermoanaerobacter pseudethanolicus (strain ATCC 33223 / 39E) (Clostridium thermohydrosulfuricum) protein is ATP-dependent protease subunit HslV.